Reading from the N-terminus, the 240-residue chain is Thiopurine S-methyltransferase (240 aa).

24–35 (WKDKWVTRHISF) contributes to the S-adenosyl-L-methionine binding site. F35 contacts substrate. K53 carries the post-translational modification N6-acetyllysine. S-adenosyl-L-methionine contacts are provided by residues L64, E85, 129-130 (SI), and R147.

It belongs to the class I-like SAM-binding methyltransferase superfamily. TPMT family. As to quaternary structure, monomer.

The protein localises to the cytoplasm. It catalyses the reaction S-adenosyl-L-methionine + a thiopurine = S-adenosyl-L-homocysteine + a thiopurine S-methylether.. The catalysed reaction is mercaptopurine + S-adenosyl-L-methionine = 6-methylthiopurine + S-adenosyl-L-homocysteine + H(+). Catalyzes the S-methylation of thiopurine drugs such as 6-mercaptopurine (also called mercaptopurine, 6-MP or its brand name Purinethol) using S-adenosyl-L-methionine as the methyl donor. TPMT activity modulates the cytotoxic effects of thiopurine prodrugs. A natural substrate for this enzyme has yet to be identified. This is Thiopurine S-methyltransferase (Tpmt) from Mus spretus (Western Mediterranean mouse).